The following is a 126-amino-acid chain: MAEKTKAFELRTKNKTQLLEHLKELRTELSSLRVAQVKSPNPSKLAKIGTVRKAIARVLTVFNQTQKNHLRAVYSKKSSSKIPTDLRYKKTRAIRRRLTNKQSKVVTLRVSKTATNFPQRVFAVKA.

This sequence belongs to the universal ribosomal protein uL29 family.

The chain is Large ribosomal subunit protein uL29 (rpl35) from Dictyostelium discoideum (Social amoeba).